A 596-amino-acid polypeptide reads, in one-letter code: SUN domain-containing protein 4 (596 aa).

Residues 28–48 (VSLSLVFLIWGLVFLSTLWIS) traverse the membrane as a helical segment. Disordered stretches follow at residues 58 to 98 (LVDS…LSSD) and 139 to 158 (KQSEINNNTVPGNDTETTGS). Acidic residues predominate over residues 66 to 77 (EPDDERADETAE). Polar residues-rich tracts occupy residues 80–95 (DATSLESTSVHSNPGL) and 141–158 (SEINNNTVPGNDTETTGS). Positions 179 to 343 (SNSRDKSLSG…SLLEVYGVDA (165 aa)) constitute an SUN domain. Residues 366 to 396 (DTEQKEKKTMQAKESFESDEDKSKQKEKEQE) are compositionally biased toward basic and acidic residues. Residues 366–410 (DTEQKEKKTMQAKESFESDEDKSKQKEKEQEASPENAVVKDEVSL) form a disordered region. Residues 475 to 544 (ASKREKEVET…LERLEWMEKK (70 aa)) are a coiled coil. The next 2 helical transmembrane spans lie at 545–565 (GVVVFTICVGFGTIAVVAVVF) and 576–596 (GGLAWLLLLISSTFVMFILSL).

In terms of assembly, forms homomers and heteromers with SUN3. Interacts with SUN1, SUN2 and TIK.

It is found in the nucleus membrane. The protein resides in the endoplasmic reticulum membrane. Encodes a member of the mid-SUN subfamily of SUN-domain proteins that is localized to both the nuclear envelope and the ER. It is involved in early seed development and nuclear morphology. [TAIR]. This is SUN domain-containing protein 4 from Arabidopsis thaliana (Mouse-ear cress).